A 793-amino-acid polypeptide reads, in one-letter code: Endonuclease MutS2 (793 aa).

329–336 contacts ATP; it reads GPNTGGKT. Residues 611-639 form a disordered region; the sequence is LARARQAVEPTEEEQRARRRGEVPRGLKP. Basic and acidic residues predominate over residues 623 to 639; it reads EEQRARRRGEVPRGLKP. A Smr domain is found at 717-792; the sequence is VDLRGLMVEE…GDGVTVAKLR (76 aa).

This sequence belongs to the DNA mismatch repair MutS family. MutS2 subfamily. As to quaternary structure, homodimer. Binds to stalled ribosomes, contacting rRNA.

In terms of biological role, endonuclease that is involved in the suppression of homologous recombination and thus may have a key role in the control of bacterial genetic diversity. Acts as a ribosome collision sensor, splitting the ribosome into its 2 subunits. Detects stalled/collided 70S ribosomes which it binds and splits by an ATP-hydrolysis driven conformational change. Acts upstream of the ribosome quality control system (RQC), a ribosome-associated complex that mediates the extraction of incompletely synthesized nascent chains from stalled ribosomes and their subsequent degradation. Probably generates substrates for RQC. This chain is Endonuclease MutS2, found in Symbiobacterium thermophilum (strain DSM 24528 / JCM 14929 / IAM 14863 / T).